A 137-amino-acid chain; its full sequence is uncharacterized protein (137 aa).

The disordered stretch occupies residues 116-137 (ARPPRGSGGTRTARNGARTASE). The segment covering 125–137 (TRTARNGARTASE) has biased composition (polar residues).

This is an uncharacterized protein from Mycobacterium bovis (strain ATCC BAA-935 / AF2122/97).